A 274-amino-acid chain; its full sequence is tRNA-cytidine(32) 2-sulfurtransferase (274 aa).

Positions 40-45 (SGGKDS) match the PP-loop motif motif. C115, C118, and C206 together coordinate [4Fe-4S] cluster.

This sequence belongs to the TtcA family. In terms of assembly, homodimer. The cofactor is Mg(2+). It depends on [4Fe-4S] cluster as a cofactor.

The protein resides in the cytoplasm. The enzyme catalyses cytidine(32) in tRNA + S-sulfanyl-L-cysteinyl-[cysteine desulfurase] + AH2 + ATP = 2-thiocytidine(32) in tRNA + L-cysteinyl-[cysteine desulfurase] + A + AMP + diphosphate + H(+). It functions in the pathway tRNA modification. In terms of biological role, catalyzes the ATP-dependent 2-thiolation of cytidine in position 32 of tRNA, to form 2-thiocytidine (s(2)C32). The sulfur atoms are provided by the cysteine/cysteine desulfurase (IscS) system. This chain is tRNA-cytidine(32) 2-sulfurtransferase, found in Pseudomonas fluorescens (strain Pf0-1).